The chain runs to 48 residues: Large ribosomal subunit protein bL33B (48 aa).

It belongs to the bacterial ribosomal protein bL33 family.

This is Large ribosomal subunit protein bL33B (rpmG2) from Mycoplasma pneumoniae (strain ATCC 29342 / M129 / Subtype 1) (Mycoplasmoides pneumoniae).